Reading from the N-terminus, the 179-residue chain is Probable chorismate pyruvate-lyase (179 aa).

The substrate site is built by arginine 82, leucine 120, and glutamate 165.

Belongs to the UbiC family.

Its subcellular location is the cytoplasm. The catalysed reaction is chorismate = 4-hydroxybenzoate + pyruvate. It functions in the pathway cofactor biosynthesis; ubiquinone biosynthesis. Functionally, removes the pyruvyl group from chorismate, with concomitant aromatization of the ring, to provide 4-hydroxybenzoate (4HB) for the ubiquinone pathway. In Vibrio parahaemolyticus serotype O3:K6 (strain RIMD 2210633), this protein is Probable chorismate pyruvate-lyase.